Here is a 615-residue protein sequence, read N- to C-terminus: tRNA uridine 5-carboxymethylaminomethyl modification enzyme MnmG (615 aa).

11 to 16 (GLGHAG) contributes to the FAD binding site. 278–292 (GPRYCPSLEDKVVRF) lines the NAD(+) pocket.

Belongs to the MnmG family. In terms of assembly, homodimer. Heterotetramer of two MnmE and two MnmG subunits. FAD is required as a cofactor.

The protein resides in the cytoplasm. Its function is as follows. NAD-binding protein involved in the addition of a carboxymethylaminomethyl (cmnm) group at the wobble position (U34) of certain tRNAs, forming tRNA-cmnm(5)s(2)U34. The protein is tRNA uridine 5-carboxymethylaminomethyl modification enzyme MnmG of Myxococcus xanthus (strain DK1622).